The primary structure comprises 637 residues: Epithelial sodium channel subunit alpha (637 aa).

The interval 1 to 34 is disordered; that stretch reads MGTASRGGSVKAEKMPEGEKTRQCKQETEQQQKE. Over 1-76 the chain is Cytoplasmic; the sequence is MGTASRGGSV…VCSKKNKMKT (76 aa). Residues 11-34 show a composition bias toward basic and acidic residues; that stretch reads KAEKMPEGEKTRQCKQETEQQQKE. Residues 77–97 traverse the membrane as a helical segment; the sequence is AFWSVLFILTFGLMYWQFGIL. Residues 98 to 548 are Extracellular-facing; sequence YREYFSYPVN…NQWSLWFGSS (451 aa). 10 cysteine pairs are disulfide-bonded: C125–C292, C217–C224, C269–C276, C380–C465, C402–C442, C402–C461, C406–C457, C415–C442, C415–C465, and C417–C431. Residues 549–569 traverse the membrane as a helical segment; that stretch reads VLSVMELAELILDFTVITFIL. Residues 570–637 are Cytoplasmic-facing; the sequence is AFRWFRSKQW…PSKDGETGLE (68 aa).

This sequence belongs to the amiloride-sensitive sodium channel (TC 1.A.6) family. SCNN1A subfamily. In terms of assembly, heterotrimer; containing an alpha/SCNN1A, a beta/SCNN1B and a gamma/SCNN1G subunit. The long isoform has been found in cochlea, colon, and cartilage. The short isoform is only found in cochlea.

Its subcellular location is the apical cell membrane. It localises to the cell projection. It is found in the cilium. The protein localises to the cytoplasmic granule. The protein resides in the cytoplasm. Its subcellular location is the cytoplasmic vesicle. It localises to the secretory vesicle. It is found in the acrosome. The protein localises to the flagellum. It carries out the reaction Na(+)(in) = Na(+)(out). With respect to regulation, originally identified and characterized by its inhibition by the diuretic drug amiloride. Its function is as follows. This is one of the three pore-forming subunits of the heterotrimeric epithelial sodium channel (ENaC), a critical regulator of sodium balance and fluid homeostasis. ENaC operates in epithelial tissues, where it mediates the electrodiffusion of sodium ions from extracellular fluid through the apical membrane of cells, with water following osmotically. This is Epithelial sodium channel subunit alpha from Gallus gallus (Chicken).